The following is a 477-amino-acid chain: Myc-associated zinc finger protein (477 aa).

Disordered regions lie at residues 59 to 78 and 121 to 146; these read AQSP…APAA and TVDT…PAAE. The span at 130–141 shows a compositional bias: pro residues; the sequence is PPAPPPPPPPVS. 4 C2H2-type zinc fingers span residues 190-212, 279-301, 307-329, and 337-360; these read YICA…EAIH, HACE…KLSH, YQCP…VRSH, and YNCS…RQVH. The residue at position 361 (serine 361) is a Phosphoserine. The C2H2-type 5 zinc finger occupies 366–388; that stretch reads FKCEKCEAAFATKDRLRAHTVRH. The segment at 392 to 413 adopts a C2H2-type 6; atypical zinc-finger fold; sequence VPCHVCGKMLSSAYISDHMKVH.

As to quaternary structure, interacts with BPTF. Forms a heterodimer with MAZ isoform 2; the interaction inhibits MAZ isoform 1-mediated transcription activation. In terms of assembly, forms a heterodimer with MAZ isoform 1; the interaction inhibits MAZ isoform 1-mediated transcription activation. As to expression, present in kidney, liver and brain. In the brain, highest levels are found in motor cortex and midfrontal cortex (at protein level). In terms of tissue distribution, expressed in the heart, brain, placenta, lung, liver, skeletal muscle and weakly expressed in the kidney. Expressed in the joint synovium.

The protein localises to the nucleus. In terms of biological role, transcriptional regulator, potentially with dual roles in transcription initiation and termination. Binds DNA and functions as a transcriptional activator. Binds to two G/A-rich sites, ME1a1 and ME1a2, within the MYC promoter having greater affinity for the former. Also binds to multiple G/C-rich sites within the promoter of the Sp1 family of transcription factors. Its function is as follows. Binds DNA and functions as a transcriptional activator. Inhibits MAZ isoform 1-mediated transcription. Functionally, binds DNA and functions as a transcriptional activator. This chain is Myc-associated zinc finger protein (MAZ), found in Homo sapiens (Human).